Consider the following 160-residue polypeptide: 2-C-methyl-D-erythritol 2,4-cyclodiphosphate synthase (160 aa).

Residues Asp-11 and His-13 each coordinate a divalent metal cation. 4-CDP-2-C-methyl-D-erythritol 2-phosphate contacts are provided by residues 11 to 13 (DVH) and 37 to 38 (HS). An a divalent metal cation-binding site is contributed by His-45. 4-CDP-2-C-methyl-D-erythritol 2-phosphate is bound by residues 59 to 61 (DIG) and Arg-145.

It belongs to the IspF family. Homotrimer. Requires a divalent metal cation as cofactor.

It catalyses the reaction 4-CDP-2-C-methyl-D-erythritol 2-phosphate = 2-C-methyl-D-erythritol 2,4-cyclic diphosphate + CMP. It participates in isoprenoid biosynthesis; isopentenyl diphosphate biosynthesis via DXP pathway; isopentenyl diphosphate from 1-deoxy-D-xylulose 5-phosphate: step 4/6. Its function is as follows. Involved in the biosynthesis of isopentenyl diphosphate (IPP) and dimethylallyl diphosphate (DMAPP), two major building blocks of isoprenoid compounds. Catalyzes the conversion of 4-diphosphocytidyl-2-C-methyl-D-erythritol 2-phosphate (CDP-ME2P) to 2-C-methyl-D-erythritol 2,4-cyclodiphosphate (ME-CPP) with a corresponding release of cytidine 5-monophosphate (CMP). The chain is 2-C-methyl-D-erythritol 2,4-cyclodiphosphate synthase from Neisseria meningitidis serogroup B (strain ATCC BAA-335 / MC58).